The primary structure comprises 404 residues: Propionate kinase (404 aa).

Belongs to the acetokinase family. PduW subfamily.

It localises to the cytoplasm. It carries out the reaction propanoate + ATP = propanoyl phosphate + ADP. It functions in the pathway polyol metabolism; 1,2-propanediol degradation. Functionally, works with phosphate acetyltransferase (pta) to capture exogenous propionate and regenerate propionyl-CoA during degradation of 1,2-propanediol (1,2-PD). This Escherichia fergusonii (strain ATCC 35469 / DSM 13698 / CCUG 18766 / IAM 14443 / JCM 21226 / LMG 7866 / NBRC 102419 / NCTC 12128 / CDC 0568-73) protein is Propionate kinase.